The primary structure comprises 629 residues: Chaperone protein DnaK (629 aa).

Positions 576 to 587 (QAYQQQQDAQAG) are enriched in low complexity. Residues 576–629 (QAYQQQQDAQAGAAGGAGGMGGMGGMADGPGGAADADGDDEEYVDADFEDVDEE) are disordered. The span at 588 to 607 (AAGGAGGMGGMGGMADGPGG) shows a compositional bias: gly residues. The span at 611-629 (ADGDDEEYVDADFEDVDEE) shows a compositional bias: acidic residues.

The protein belongs to the heat shock protein 70 family.

In terms of biological role, acts as a chaperone. The protein is Chaperone protein DnaK of Halobacterium salinarum (strain ATCC 29341 / DSM 671 / R1).